Consider the following 462-residue polypeptide: Zinc transporter 6-B (462 aa).

The Cytoplasmic segment spans residues 1–33 (MGTIYLFRKTQRSLLGKLTQEFRLVTADRRSWK). A helical membrane pass occupies residues 34–54 (ILLFGAINVVCTGFLLTWCSS). Topologically, residues 55 to 64 (TNSMALTAYT) are extracellular. Residues 65-85 (YLTIFDLFSLITSLISYWVMM) form a helical membrane-spanning segment. The Cytoplasmic portion of the chain corresponds to 86–98 (KKPSPTYSFGFER). Residues 99–119 (LEVLAVFASTVLAQLGALFIL) form a helical membrane-spanning segment. Residues 120 to 134 (KESAERFLEQPEIHT) lie on the Extracellular side of the membrane. Residues 135–155 (GRLLVGTFVALFFNLFTMLSI) form a helical membrane-spanning segment. At 156–200 (RNKPFAYVSEAASTSWLQEHVADLSRSLCGVIPGLSSIFLPRMNP) the chain is on the cytoplasmic side. Residues 201–221 (FVLIDIAGALALCITYMLIEI) form a helical membrane-spanning segment. Over 222–223 (NN) the chain is Extracellular. Residues 224 to 244 (YFAVDTASAIAIAVMTFGTMY) form a helical membrane-spanning segment. Over 245–462 (PMSVYSGKVL…TPGQFTQFRQ (218 aa)) the chain is Cytoplasmic.

It belongs to the cation diffusion facilitator (CDF) transporter (TC 2.A.4) family. SLC30A subfamily. As to quaternary structure, heterodimer with SLC30A5; form a functional zinc ion transmembrane transporter.

Its subcellular location is the golgi apparatus. The protein resides in the trans-Golgi network membrane. Has probably no intrinsic transporter activity but together with SLC30A5 forms a functional zinc ion:proton antiporter heterodimer, mediating zinc entry into the lumen of organelles along the secretory pathway. As part of that zinc ion:proton antiporter, contributes to zinc ion homeostasis within the early secretory pathway and regulates the activation and folding of enzymes like alkaline phosphatases and enzymes involved in phosphatidylinositol glycan anchor biosynthesis. In Xenopus laevis (African clawed frog), this protein is Zinc transporter 6-B (slc30a6-b).